The primary structure comprises 183 residues: ATP synthase subunit delta (183 aa).

The protein belongs to the ATPase delta chain family. In terms of assembly, F-type ATPases have 2 components, F(1) - the catalytic core - and F(0) - the membrane proton channel. F(1) has five subunits: alpha(3), beta(3), gamma(1), delta(1), epsilon(1). F(0) has three main subunits: a(1), b(2) and c(10-14). The alpha and beta chains form an alternating ring which encloses part of the gamma chain. F(1) is attached to F(0) by a central stalk formed by the gamma and epsilon chains, while a peripheral stalk is formed by the delta and b chains.

It localises to the cell inner membrane. F(1)F(0) ATP synthase produces ATP from ADP in the presence of a proton or sodium gradient. F-type ATPases consist of two structural domains, F(1) containing the extramembraneous catalytic core and F(0) containing the membrane proton channel, linked together by a central stalk and a peripheral stalk. During catalysis, ATP synthesis in the catalytic domain of F(1) is coupled via a rotary mechanism of the central stalk subunits to proton translocation. In terms of biological role, this protein is part of the stalk that links CF(0) to CF(1). It either transmits conformational changes from CF(0) to CF(1) or is implicated in proton conduction. The chain is ATP synthase subunit delta from Desulfosudis oleivorans (strain DSM 6200 / JCM 39069 / Hxd3) (Desulfococcus oleovorans).